Consider the following 266-residue polypeptide: Phosphatidylglycerol--prolipoprotein diacylglyceryl transferase (266 aa).

A run of 4 helical transmembrane segments spans residues 14–34, 55–75, 91–111, and 117–137; these read FGPL…AFFW, FLFY…ILFY, WKGG…MWLF, and VSMF…LFFG. R138 lines the a 1,2-diacyl-sn-glycero-3-phospho-(1'-sn-glycerol) pocket. The next 3 membrane-spanning stretches (helical) occupy residues 172–192, 201–221, and 235–255; these read YPTQ…ILMF, GAAS…VEFF, and WVTM…ALVV.

Belongs to the Lgt family.

The protein localises to the cell inner membrane. It carries out the reaction L-cysteinyl-[prolipoprotein] + a 1,2-diacyl-sn-glycero-3-phospho-(1'-sn-glycerol) = an S-1,2-diacyl-sn-glyceryl-L-cysteinyl-[prolipoprotein] + sn-glycerol 1-phosphate + H(+). Its pathway is protein modification; lipoprotein biosynthesis (diacylglyceryl transfer). In terms of biological role, catalyzes the transfer of the diacylglyceryl group from phosphatidylglycerol to the sulfhydryl group of the N-terminal cysteine of a prolipoprotein, the first step in the formation of mature lipoproteins. This is Phosphatidylglycerol--prolipoprotein diacylglyceryl transferase from Hydrogenovibrio crunogenus (strain DSM 25203 / XCL-2) (Thiomicrospira crunogena).